The following is a 314-amino-acid chain: Cytochrome bo(3) ubiquinol oxidase subunit 2 (314 aa).

An N-terminal signal peptide occupies residues 1–23 (MSKKRYPRLFGILPFLGMLLLSG). Residue C24 is the site of N-palmitoyl cysteine attachment. C24 carries the S-diacylglycerol cysteine lipid modification. Residues 24-42 (CNWTLLDPKGQVGIEQKNL) lie on the Periplasmic side of the membrane. The helical transmembrane segment at 43–63 (ILIATGLMLLVVIPVIIMTVV) threads the bilayer. Residues 64–86 (FAWKYRASNKAATYTPDWSHSTK) are Cytoplasmic-facing. The chain crosses the membrane as a helical span at residues 87–107 (IEAAVWIIPILIIIALGYFTY). The Periplasmic segment spans residues 108–314 (HSTHKLDPYR…SMQPAAGAEE (207 aa)). The span at 278–293 (YEGMNRGRPSHEEAGS) shows a compositional bias: basic and acidic residues. Residues 278–314 (YEGMNRGRPSHEEAGSKDLATTKGVESSMQPAAGAEE) are disordered.

It belongs to the cytochrome c oxidase subunit 2 family. Heterooctamer of two A chains, two B chains, two C chains and two D chains.

Its subcellular location is the cell inner membrane. Functionally, cytochrome bo(3) ubiquinol terminal oxidase is the component of the aerobic respiratory chain of E.coli that predominates when cells are grown at high aeration. Has proton pump activity across the membrane in addition to electron transfer, pumping 2 protons/electron. This chain is Cytochrome bo(3) ubiquinol oxidase subunit 2 (cyoA), found in Pseudomonas putida (Arthrobacter siderocapsulatus).